Reading from the N-terminus, the 400-residue chain is Phosphoribosylamine--glycine ligase (400 aa).

The region spanning Lys-99–Arg-303 is the ATP-grasp domain. Ile-125–Ser-186 provides a ligand contact to ATP. Residues Glu-273 and Asn-275 each coordinate Mg(2+).

It belongs to the GARS family. Requires Mg(2+) as cofactor. Mn(2+) is required as a cofactor.

It catalyses the reaction 5-phospho-beta-D-ribosylamine + glycine + ATP = N(1)-(5-phospho-beta-D-ribosyl)glycinamide + ADP + phosphate + H(+). Its pathway is purine metabolism; IMP biosynthesis via de novo pathway; N(1)-(5-phospho-D-ribosyl)glycinamide from 5-phospho-alpha-D-ribose 1-diphosphate: step 2/2. The protein is Phosphoribosylamine--glycine ligase of Thermotoga maritima (strain ATCC 43589 / DSM 3109 / JCM 10099 / NBRC 100826 / MSB8).